The chain runs to 353 residues: UDP-N-acetylenolpyruvoylglucosamine reductase (353 aa).

Residues 31-201 enclose the FAD-binding PCMH-type domain; it reads LASHAPAFVA…GSVRFALPRP (171 aa). The active site involves Arg-177. Ser-250 acts as the Proton donor in catalysis. The active site involves Glu-346.

The protein belongs to the MurB family. FAD is required as a cofactor.

Its subcellular location is the cytoplasm. The catalysed reaction is UDP-N-acetyl-alpha-D-muramate + NADP(+) = UDP-N-acetyl-3-O-(1-carboxyvinyl)-alpha-D-glucosamine + NADPH + H(+). The protein operates within cell wall biogenesis; peptidoglycan biosynthesis. Its function is as follows. Cell wall formation. This is UDP-N-acetylenolpyruvoylglucosamine reductase from Bordetella parapertussis (strain 12822 / ATCC BAA-587 / NCTC 13253).